Consider the following 276-residue polypeptide: Shikimate dehydrogenase (NADP(+)) (276 aa).

Shikimate-binding positions include 15–17 (SMS) and threonine 63. Lysine 67 (proton acceptor) is an active-site residue. Aspartate 79 contributes to the NADP(+) binding site. Positions 88 and 103 each coordinate shikimate. NADP(+) is bound by residues 130-134 (GAGGA), 154-159 (NRTLSR), and isoleucine 217. Residue tyrosine 219 participates in shikimate binding. Glycine 240 is an NADP(+) binding site.

It belongs to the shikimate dehydrogenase family. As to quaternary structure, homodimer.

The enzyme catalyses shikimate + NADP(+) = 3-dehydroshikimate + NADPH + H(+). The protein operates within metabolic intermediate biosynthesis; chorismate biosynthesis; chorismate from D-erythrose 4-phosphate and phosphoenolpyruvate: step 4/7. Its function is as follows. Involved in the biosynthesis of the chorismate, which leads to the biosynthesis of aromatic amino acids. Catalyzes the reversible NADPH linked reduction of 3-dehydroshikimate (DHSA) to yield shikimate (SA). This chain is Shikimate dehydrogenase (NADP(+)), found in Oceanobacillus iheyensis (strain DSM 14371 / CIP 107618 / JCM 11309 / KCTC 3954 / HTE831).